The chain runs to 737 residues: Oligopeptide transporter 3 (737 aa).

A run of 16 helical transmembrane segments spans residues 45-65 (AWFL…FFTY), 69-89 (PLTI…KFMA), 117-137 (VIIT…AYSI), 153-173 (FICG…WAGI), 215-235 (FLVA…LFPI), 255-275 (VGSG…AGIS), 289-309 (ILNV…VCYW), 357-377 (LYLS…FTAT), 418-438 (WWFY…SFVW), 446-466 (WWGM…IGVI), 478-498 (IIGQ…NLIF), 532-552 (AQLV…WWML), 604-624 (VWLF…SKIF), 629-649 (WIPL…PPAT), 650-670 (PTNI…VFNY), and 681-701 (VLSA…FFAL).

Belongs to the oligopeptide OPT transporter (TC 2.A.67.1) family. As to expression, strong expression in flowers, leaves and roots. Preferentially expressed in the vascular tissues of seedlings and mature plants as well as in pollen and developing embryos.

It localises to the membrane. May be involved in the translocation of tetra- and pentapeptides across the cellular membrane in an energy-dependent manner. Also acts as a metal transporter that could be a component of the copper transport machinery. Essential for early embryo development. The chain is Oligopeptide transporter 3 (OPT3) from Arabidopsis thaliana (Mouse-ear cress).